The following is a 200-amino-acid chain: Large ribosomal subunit protein bL25 (200 aa).

It belongs to the bacterial ribosomal protein bL25 family. CTC subfamily. Part of the 50S ribosomal subunit; part of the 5S rRNA/L5/L18/L25 subcomplex. Contacts the 5S rRNA. Binds to the 5S rRNA independently of L5 and L18.

In terms of biological role, this is one of the proteins that binds to the 5S RNA in the ribosome where it forms part of the central protuberance. This is Large ribosomal subunit protein bL25 from Nocardia farcinica (strain IFM 10152).